A 130-amino-acid chain; its full sequence is Small ribosomal subunit protein uS9 (130 aa).

It belongs to the universal ribosomal protein uS9 family. Part of the 30S ribosomal subunit.

The sequence is that of Small ribosomal subunit protein uS9 (rpsI) from Bacillus subtilis (strain 168).